Reading from the N-terminus, the 246-residue chain is Probable phosphatase ASA_1316 (246 aa).

Residues His8, His10, His16, His41, Glu74, His102, His132, Asp193, and His195 each contribute to the Zn(2+) site.

This sequence belongs to the PHP family. Requires Zn(2+) as cofactor.

The protein is Probable phosphatase ASA_1316 of Aeromonas salmonicida (strain A449).